The chain runs to 194 residues: uncharacterized protein (194 aa).

2 disordered regions span residues 52–71 and 86–194; these read KGRT…EKYK and AEAL…DGGS. Polar residues-rich tracts occupy residues 53–63, 98–111, and 119–132; these read GRTTQSAINSE, ALTS…SSTN, and IAHS…TSPA. Residues 133 to 169 are compositionally biased toward basic residues; sequence NRHRRKEKERTRSNHRHGSHRRHEPYRTHLSRHHRHS. Over residues 175 to 194 the composition is skewed to basic and acidic residues; the sequence is SKRDDRYERRREHSPNDGGS.

This is an uncharacterized protein from Schizosaccharomyces pombe (strain 972 / ATCC 24843) (Fission yeast).